The sequence spans 523 residues: Bifunctional purine biosynthesis protein PurH (523 aa).

The MGS-like domain maps to 4-152 (DHIRRPIRRA…KNHPSVAVVT (149 aa)).

Belongs to the PurH family.

The catalysed reaction is (6R)-10-formyltetrahydrofolate + 5-amino-1-(5-phospho-beta-D-ribosyl)imidazole-4-carboxamide = 5-formamido-1-(5-phospho-D-ribosyl)imidazole-4-carboxamide + (6S)-5,6,7,8-tetrahydrofolate. The enzyme catalyses IMP + H2O = 5-formamido-1-(5-phospho-D-ribosyl)imidazole-4-carboxamide. Its pathway is purine metabolism; IMP biosynthesis via de novo pathway; 5-formamido-1-(5-phospho-D-ribosyl)imidazole-4-carboxamide from 5-amino-1-(5-phospho-D-ribosyl)imidazole-4-carboxamide (10-formyl THF route): step 1/1. It functions in the pathway purine metabolism; IMP biosynthesis via de novo pathway; IMP from 5-formamido-1-(5-phospho-D-ribosyl)imidazole-4-carboxamide: step 1/1. This chain is Bifunctional purine biosynthesis protein PurH, found in Mycobacterium ulcerans (strain Agy99).